The primary structure comprises 403 residues: Digeranylgeranylglycerophospholipid reductase 1 (403 aa).

10 residues coordinate FAD: alanine 14, aspartate 33, cysteine 44, alanine 45, glycine 47, arginine 98, valine 122, aspartate 277, glycine 289, and isoleucine 290.

Belongs to the geranylgeranyl reductase family. DGGGPL reductase subfamily. FAD is required as a cofactor.

It carries out the reaction a 2,3-bis-O-phytanyl-sn-glycerol 1-phospholipid + 8 A = a 2,3-bis-O-(geranylgeranyl)-sn-glycerol 1-phospholipid + 8 AH2. It catalyses the reaction 2,3-bis-O-(phytanyl)-sn-glycerol 1-phosphate + 8 A = 2,3-bis-O-(geranylgeranyl)-sn-glycerol 1-phosphate + 8 AH2. The enzyme catalyses CDP-2,3-bis-O-(geranylgeranyl)-sn-glycerol + 8 AH2 = CDP-2,3-bis-O-(phytanyl)-sn-glycerol + 8 A. The catalysed reaction is archaetidylserine + 8 AH2 = 2,3-bis-O-phytanyl-sn-glycero-3-phospho-L-serine + 8 A. Its pathway is membrane lipid metabolism; glycerophospholipid metabolism. Its function is as follows. Is involved in the reduction of 2,3-digeranylgeranylglycerophospholipids (unsaturated archaeols) into 2,3-diphytanylglycerophospholipids (saturated archaeols) in the biosynthesis of archaeal membrane lipids. Catalyzes the formation of archaetidic acid (2,3-di-O-phytanyl-sn-glyceryl phosphate) from 2,3-di-O-geranylgeranylglyceryl phosphate (DGGGP) via the hydrogenation of each double bond of the isoprenoid chains. Is also probably able to reduce double bonds of geranyl groups in CDP-2,3-bis-O-(geranylgeranyl)-sn-glycerol and archaetidylserine, thus acting at various stages in the biosynthesis of archaeal membrane lipids. The polypeptide is Digeranylgeranylglycerophospholipid reductase 1 (Methanosphaera stadtmanae (strain ATCC 43021 / DSM 3091 / JCM 11832 / MCB-3)).